The chain runs to 185 residues: Early nodulin-like protein 17 (185 aa).

The signal sequence occupies residues 1–21 (MARRDQLVSFLCFFLIVSAVA). One can recognise a Phytocyanin domain in the interval 37–137 (KQYVVGGRSG…GQRLMINVDS (101 aa)). N-linked (GlcNAc...) asparagine glycans are attached at residues asparagine 79 and asparagine 94. Cysteine 93 and cysteine 125 are disulfide-bonded. The disordered stretch occupies residues 136-155 (DSAPSPSPSPSPAPQEAATA). Serine 156 carries GPI-anchor amidated serine lipidation. Positions 157-185 (AATSSSAATAAHALLLAAMAMMGLILGEW) are cleaved as a propeptide — removed in mature form.

This sequence belongs to the early nodulin-like (ENODL) family. Expressed ubiquitously. Accumulates mainly in anthers, stigmas and ovaries.

It is found in the cell membrane. Functionally, may act as a carbohydrate transporter. Required for male fertility and seed yield. The sequence is that of Early nodulin-like protein 17 from Oryza sativa subsp. japonica (Rice).